The primary structure comprises 223 residues: Expansin-B6 (223 aa).

Residues 16–124 form the Expansin-like EG45 domain; that stretch reads GGACGFAVAN…RRVECLYRRT (109 aa). Disulfide bonds link cysteine 19–cysteine 46, cysteine 49–cysteine 119, and cysteine 54–cysteine 60. An Expansin-like CBD domain is found at 137–218; that stretch reads YYISFVVEYE…NWKPNETYRS (82 aa). The N-linked (GlcNAc...) asparagine glycan is linked to asparagine 213.

The protein belongs to the expansin family. Expansin B subfamily.

It is found in the secreted. The protein resides in the cell wall. The protein localises to the membrane. In terms of biological role, may cause loosening and extension of plant cell walls by disrupting non-covalent bonding between cellulose microfibrils and matrix glucans. This is Expansin-B6 from Arabidopsis thaliana (Mouse-ear cress).